A 225-amino-acid polypeptide reads, in one-letter code: Small ribosomal subunit protein L51-b (225 aa).

The N-terminal 84 residues, 1–84, are a transit peptide targeting the mitochondrion; it reads MKFPDLLRCS…QCAFISSDRF (84 aa).

Belongs to the bacterial ribosomal protein bS1 family. As to quaternary structure, component of the mitochondrial small ribosomal subunit (mt-SSU). Mature yeast 74S mitochondrial ribosomes consist of a small (37S) and a large (54S) subunit. The 37S small subunit contains a 15S ribosomal RNA (15S mt-rRNA) and at least 32 different proteins. The 54S large subunit contains a 21S rRNA (21S mt-rRNA) and at least 45 different proteins. This subunit is mutually exclusive with mrp51/small ribosomal subunit protein bS1m.

The protein resides in the mitochondrion. In terms of biological role, component of the mitochondrial ribosome (mitoribosome), a dedicated translation machinery responsible for the synthesis of mitochondrial genome-encoded proteins, including at least some of the essential transmembrane subunits of the mitochondrial respiratory chain. The mitoribosomes are attached to the mitochondrial inner membrane and translation products are cotranslationally integrated into the membrane. Functionally interacts with the 5'-UTR of mitochondrial mRNAs. Specifically plays a role in the translation of cob1/cytochrome b and cox3. Has a role in meiosis. This is Small ribosomal subunit protein L51-b from Schizosaccharomyces pombe (strain 972 / ATCC 24843) (Fission yeast).